We begin with the raw amino-acid sequence, 424 residues long: 3-ketoacyl-CoA thiolase A, peroxisomal (424 aa).

A peroxisome-targeting transit peptide spans 1 to 26 (MHRLQVVLGHLAGRPESSSALQAAPC). A PTS2-type peroxisomal targeting signal region spans residues 1–26 (MHRLQVVLGHLAGRPESSSALQAAPC). Catalysis depends on cysteine 123, which acts as the Acyl-thioester intermediate. An N6-acetyllysine mark is found at lysine 173 and lysine 234. Residues histidine 377 and cysteine 408 each act as proton acceptor in the active site.

This sequence belongs to the thiolase-like superfamily. Thiolase family. In terms of assembly, homodimer. Interacts (via PTS2-type peroxisomal targeting signal region) with PEX7; leading to its translocation into peroxisomes. As to expression, mainly expressed in liver and intestine.

Its subcellular location is the peroxisome. The enzyme catalyses an acyl-CoA + acetyl-CoA = a 3-oxoacyl-CoA + CoA. It catalyses the reaction 2 acetyl-CoA = acetoacetyl-CoA + CoA. The catalysed reaction is tetradecanoyl-CoA + acetyl-CoA = 3-oxohexadecanoyl-CoA + CoA. It carries out the reaction hexanoyl-CoA + acetyl-CoA = 3-oxooctanoyl-CoA + CoA. The enzyme catalyses 3-oxohexadecanedioyl-CoA + CoA = tetradecanedioyl-CoA + acetyl-CoA. It catalyses the reaction 3-oxo-(6Z,9Z,12Z,15Z,18Z,21Z)-tetracosahexaenoyl-CoA + CoA = (4Z,7Z,10Z,13Z,16Z,19Z)-docosahexaenoyl-CoA + acetyl-CoA. It participates in lipid metabolism; peroxisomal fatty acid beta-oxidation. Functionally, responsible for the thiolytic cleavage of straight chain 3-keto fatty acyl-CoAs (3-oxoacyl-CoAs). Plays an important role in fatty acid peroxisomal beta-oxidation. Catalyzes the cleavage of short, medium, long, and very long straight chain 3-oxoacyl-CoAs. The polypeptide is 3-ketoacyl-CoA thiolase A, peroxisomal (Mus musculus (Mouse)).